We begin with the raw amino-acid sequence, 106 residues long: Large ribosomal subunit protein uL24 (106 aa).

The protein belongs to the universal ribosomal protein uL24 family. In terms of assembly, part of the 50S ribosomal subunit.

Functionally, one of two assembly initiator proteins, it binds directly to the 5'-end of the 23S rRNA, where it nucleates assembly of the 50S subunit. One of the proteins that surrounds the polypeptide exit tunnel on the outside of the subunit. This chain is Large ribosomal subunit protein uL24, found in Parabacteroides distasonis (strain ATCC 8503 / DSM 20701 / CIP 104284 / JCM 5825 / NCTC 11152).